A 253-amino-acid polypeptide reads, in one-letter code: Adenosylcobinamide-GDP ribazoletransferase (253 aa).

A run of 7 helical transmembrane segments spans residues 33–53 (ISPL…YVLL), 56–76 (ILEA…RGFN), 106–126 (IGSG…VALL), 132–152 (FYTI…GLYI), 178–198 (VLLF…FLVF), 209–229 (LGGS…PLFL), and 233–253 (EITN…LYLH).

Belongs to the CobS family. It depends on Mg(2+) as a cofactor.

It localises to the cell membrane. The enzyme catalyses alpha-ribazole + adenosylcob(III)inamide-GDP = adenosylcob(III)alamin + GMP + H(+). The catalysed reaction is alpha-ribazole 5'-phosphate + adenosylcob(III)inamide-GDP = adenosylcob(III)alamin 5'-phosphate + GMP + H(+). It functions in the pathway cofactor biosynthesis; adenosylcobalamin biosynthesis; adenosylcobalamin from cob(II)yrinate a,c-diamide: step 7/7. Its function is as follows. Joins adenosylcobinamide-GDP and alpha-ribazole to generate adenosylcobalamin (Ado-cobalamin). Also synthesizes adenosylcobalamin 5'-phosphate from adenosylcobinamide-GDP and alpha-ribazole 5'-phosphate. The sequence is that of Adenosylcobinamide-GDP ribazoletransferase from Saccharolobus islandicus (strain M.16.27) (Sulfolobus islandicus).